A 385-amino-acid polypeptide reads, in one-letter code: O-phospho-L-seryl-tRNA:Cys-tRNA synthase (385 aa).

Pyridoxal 5'-phosphate-binding positions include 89 to 90 (AR), Asn-195, and 218 to 220 (SGH). An N6-(pyridoxal phosphate)lysine modification is found at Lys-221.

The protein belongs to the SepCysS family. In terms of assembly, homodimer. Interacts with SepRS. Requires pyridoxal 5'-phosphate as cofactor.

It catalyses the reaction O-phospho-L-seryl-tRNA(Cys) + hydrogen sulfide + H(+) = L-cysteinyl-tRNA(Cys) + phosphate. In terms of biological role, converts O-phospho-L-seryl-tRNA(Cys) (Sep-tRNA(Cys)) to L-cysteinyl-tRNA(Cys) (Cys-tRNA(Cys)). The chain is O-phospho-L-seryl-tRNA:Cys-tRNA synthase from Methanococcus aeolicus (strain ATCC BAA-1280 / DSM 17508 / OCM 812 / Nankai-3).